We begin with the raw amino-acid sequence, 442 residues long: tRNA-2-methylthio-N(6)-dimethylallyladenosine synthase (442 aa).

The region spanning 2–120 (KKVFIRTFGC…LPKMIVDKET (119 aa)) is the MTTase N-terminal domain. 6 residues coordinate [4Fe-4S] cluster: Cys-11, Cys-49, Cys-83, Cys-157, Cys-161, and Cys-164. The Radical SAM core domain maps to 143-375 (RVEGGAAFVS…NEVIEAETAR (233 aa)). The TRAM domain occupies 378–441 (QTMVGTVQRC…TFSLRGKVVE (64 aa)).

The protein belongs to the methylthiotransferase family. MiaB subfamily. Monomer. Requires [4Fe-4S] cluster as cofactor.

The protein localises to the cytoplasm. The catalysed reaction is N(6)-dimethylallyladenosine(37) in tRNA + (sulfur carrier)-SH + AH2 + 2 S-adenosyl-L-methionine = 2-methylsulfanyl-N(6)-dimethylallyladenosine(37) in tRNA + (sulfur carrier)-H + 5'-deoxyadenosine + L-methionine + A + S-adenosyl-L-homocysteine + 2 H(+). Its function is as follows. Catalyzes the methylthiolation of N6-(dimethylallyl)adenosine (i(6)A), leading to the formation of 2-methylthio-N6-(dimethylallyl)adenosine (ms(2)i(6)A) at position 37 in tRNAs that read codons beginning with uridine. This chain is tRNA-2-methylthio-N(6)-dimethylallyladenosine synthase, found in Neisseria meningitidis serogroup B (strain ATCC BAA-335 / MC58).